A 131-amino-acid polypeptide reads, in one-letter code: Small ribosomal subunit protein eS17 (131 aa).

This sequence belongs to the eukaryotic ribosomal protein eS17 family.

The sequence is that of Small ribosomal subunit protein eS17 (RpS17) from Drosophila melanogaster (Fruit fly).